Here is a 49-residue protein sequence, read N- to C-terminus: L-amino-acid oxidase (49 aa).

FAD is bound at residue 43-44; that stretch reads MS.

It belongs to the flavin monoamine oxidase family. FIG1 subfamily. In terms of assembly, homodimer; non-covalently linked. The cofactor is FAD. N-glycosylated. Expressed by the venom gland.

The protein localises to the secreted. The enzyme catalyses an L-alpha-amino acid + O2 + H2O = a 2-oxocarboxylate + H2O2 + NH4(+). The catalysed reaction is L-leucine + O2 + H2O = 4-methyl-2-oxopentanoate + H2O2 + NH4(+). Functionally, catalyzes an oxidative deamination of predominantly hydrophobic and aromatic L-amino acids, thus producing hydrogen peroxide that may contribute to the diverse toxic effects of this enzyme. Shows activity on L-Leu. Exhibits diverse biological activities, such as hemorrhage, hemolysis, edema, antibacterial and antiparasitic activities, as well as regulation of platelet aggregation. Its effect on platelets is controversial, since it either induces aggregation or inhibits agonist-induced aggregation. These different effects are probably due to different experimental conditions. In addition, this protein induces apoptosis and necrosis and has inhibitory effects on rat kidney function (decrease of blood flow and glomerular filtration). The polypeptide is L-amino-acid oxidase (Bothrops insularis (Golden lancehead)).